The primary structure comprises 479 residues: Cobyric acid synthase (479 aa).

In terms of domain architecture, GATase cobBQ-type spans 250–442 (TRTVAVVAYP…LHGLFEDAAA (193 aa)). Residue C331 is the Nucleophile of the active site. The active site involves H434.

It belongs to the CobB/CobQ family. CobQ subfamily.

The protein operates within cofactor biosynthesis; adenosylcobalamin biosynthesis. Catalyzes amidations at positions B, D, E, and G on adenosylcobyrinic A,C-diamide. NH(2) groups are provided by glutamine, and one molecule of ATP is hydrogenolyzed for each amidation. In Variovorax paradoxus (strain S110), this protein is Cobyric acid synthase.